The chain runs to 510 residues: NAD(P)H-quinone oxidoreductase subunit 2, chloroplastic (510 aa).

A run of 11 helical transmembrane segments spans residues 24–44, 59–79, 99–119, 124–144, 149–169, 183–203, 295–315, 323–343, 347–367, 395–415, and 418–438; these read LLLF…GLIL, WFYF…LFRW, IFQF…VEYI, MAIT…MFLC, LITI…LSGY, YLLM…WLYG, WHLL…LIAI, MLAY…IVGD, GYAS…GTFA, ALSS…AGFF, and LYLF…IGLL.

This sequence belongs to the complex I subunit 2 family. As to quaternary structure, NDH is composed of at least 16 different subunits, 5 of which are encoded in the nucleus.

Its subcellular location is the plastid. The protein resides in the chloroplast thylakoid membrane. The catalysed reaction is a plastoquinone + NADH + (n+1) H(+)(in) = a plastoquinol + NAD(+) + n H(+)(out). It carries out the reaction a plastoquinone + NADPH + (n+1) H(+)(in) = a plastoquinol + NADP(+) + n H(+)(out). Its function is as follows. NDH shuttles electrons from NAD(P)H:plastoquinone, via FMN and iron-sulfur (Fe-S) centers, to quinones in the photosynthetic chain and possibly in a chloroplast respiratory chain. The immediate electron acceptor for the enzyme in this species is believed to be plastoquinone. Couples the redox reaction to proton translocation, and thus conserves the redox energy in a proton gradient. The chain is NAD(P)H-quinone oxidoreductase subunit 2, chloroplastic from Asparagus officinalis (Garden asparagus).